The sequence spans 240 residues: tRNA (guanine-N(1)-)-methyltransferase (240 aa).

Residues glycine 108 and 127 to 132 (LGDFIL) each bind S-adenosyl-L-methionine.

Belongs to the RNA methyltransferase TrmD family. Homodimer.

It localises to the cytoplasm. The catalysed reaction is guanosine(37) in tRNA + S-adenosyl-L-methionine = N(1)-methylguanosine(37) in tRNA + S-adenosyl-L-homocysteine + H(+). In terms of biological role, specifically methylates guanosine-37 in various tRNAs. This Streptococcus mutans serotype c (strain ATCC 700610 / UA159) protein is tRNA (guanine-N(1)-)-methyltransferase.